The primary structure comprises 214 residues: Variable small protein 24 (214 aa).

An N-terminal signal peptide occupies residues 1–18; sequence MRKRISAIIMTLFMVFMS. The N-palmitoyl cysteine moiety is linked to residue C19. Residue C19 is the site of S-diacylglycerol cysteine attachment. The segment at 146–172 is disordered; sequence TELGKKDASDDDTKKAIKKDNSDKTKG.

It belongs to the variable small protein (Vsp) family.

The protein localises to the cell outer membrane. Functionally, the Vlp and Vsp proteins are antigenically distinct proteins, only one vlp or vsp gene is transcriptionally active at any one time. Switching between these genes is a mechanism of host immune response evasion. The polypeptide is Variable small protein 24 (Borrelia hermsii).